Reading from the N-terminus, the 234-residue chain is Synaptogyrin-4 (234 aa).

The MARVEL domain occupies 18–169; that stretch reads FLKRPKAITR…QAYLAFQELR (152 aa). Helical transmembrane passes span 25-45, 66-86, 104-124, and 145-165; these read ITRIFAGVFSLIVFSSLLTDG, CSIAVGAGLLAFLSSLAFLAL, LLDLILAVIWAGVWAVGFCFL, and AAITFSFFSILVWIFQAYLAF. The segment at 191 to 226 is disordered; sequence SPPSAASPVNTPTTGPHGPSYASSSLSPYLSTPKAP. A compositionally biased stretch (low complexity) spans 209–221; that stretch reads PSYASSSLSPYLS.

Belongs to the synaptogyrin family.

The protein resides in the membrane. This Bos taurus (Bovine) protein is Synaptogyrin-4 (SYNGR4).